The chain runs to 71 residues: Translation initiation factor IF-1 (71 aa).

In terms of domain architecture, S1-like spans 1-71 (MSKDDLIQFT…LTKGRVIHRH (71 aa)).

It belongs to the IF-1 family. Component of the 30S ribosomal translation pre-initiation complex which assembles on the 30S ribosome in the order IF-2 and IF-3, IF-1 and N-formylmethionyl-tRNA(fMet); mRNA recruitment can occur at any time during PIC assembly.

The protein resides in the cytoplasm. Its function is as follows. One of the essential components for the initiation of protein synthesis. Stabilizes the binding of IF-2 and IF-3 on the 30S subunit to which N-formylmethionyl-tRNA(fMet) subsequently binds. Helps modulate mRNA selection, yielding the 30S pre-initiation complex (PIC). Upon addition of the 50S ribosomal subunit IF-1, IF-2 and IF-3 are released leaving the mature 70S translation initiation complex. In Rickettsia typhi (strain ATCC VR-144 / Wilmington), this protein is Translation initiation factor IF-1.